The sequence spans 101 residues: Small ribosomal subunit protein bS18c (101 aa).

Belongs to the bacterial ribosomal protein bS18 family. Part of the 30S ribosomal subunit.

The protein localises to the plastid. It localises to the chloroplast. This Morus indica (Mulberry) protein is Small ribosomal subunit protein bS18c.